The following is a 317-amino-acid chain: Secreted mono- and diacylglycerol lipase 3 (317 aa).

The first 29 residues, 1–29 (MMFADDLVRMAVLRFITVALAAITNVANA), serve as a signal peptide directing secretion. An intrachain disulfide couples Cys-61 to Cys-310. Asn-108 is a glycosylation site (N-linked (GlcNAc...) asparagine). Ser-175 (nucleophile) is an active-site residue. Asn-194 carries an N-linked (GlcNAc...) asparagine glycan. Residue Asp-234 is part of the active site. N-linked (GlcNAc...) asparagine glycosylation occurs at Asn-258. His-294 is an active-site residue.

It belongs to the AB hydrolase superfamily. Lipase family. Class 3 subfamily.

It localises to the secreted. It carries out the reaction a monoacylglycerol + H2O = glycerol + a fatty acid + H(+). It catalyses the reaction a diacylglycerol + H2O = a monoacylglycerol + a fatty acid + H(+). In terms of biological role, secreted mono- and diacylglycerol lipase involved in plant virulence. Has a substrate preference for p-nitrophenyl esters with a carbon chain length of C10 (p-nitrophenyl caprate). The protein is Secreted mono- and diacylglycerol lipase 3 of Gibberella zeae (strain ATCC MYA-4620 / CBS 123657 / FGSC 9075 / NRRL 31084 / PH-1) (Wheat head blight fungus).